The sequence spans 412 residues: MDVNQAKQEHLLALKVMRLTKPTLFTNMPVTCEDRDLPGDLFLRLMKDDPSTVKGAETLILGEMLTLPQNFGNIFLGETFSSYISVHNDSSQVVKDILVKADLQTSSQRLNLSASNSAVSELKPECCIDDVIHHEVKEIGTHILVCAVSYTTQTGEKLYFRKFFKFQVLKPLDVKTKFYNAETDEVFLEAQIQNITTSPMFMEKVSLEPSMMYNVTELNNVASGDESSESTFGKMSYLQPLDTRQYLYCLKPKPEFAEKAGVIKGVTVIGKLDIVWKTNLGERGRLQTSQLQRMAPGYGDVRLSLEFIPDTVDLEEPFDITCKITNCSERTMDLLLEMCNTRSVHWCGVSGRQLGKLSPSASLSIPLKLLSSVQGLQSISGLRLTDTFLKRTYEYDDIAQVCVVCPYTSPES.

The protein belongs to the TRAPPC13 family. Part of the multisubunit TRAPP (transport protein particle) complex.

The chain is Trafficking protein particle complex subunit 13 (trappc13) from Danio rerio (Zebrafish).